The following is a 403-amino-acid chain: F-box/kelch-repeat protein At5g39560 (403 aa).

Positions 26–72 (PPSLMSLPYEIIENILARISKWSYPNLSLVSKSFLSLLSSPQLYKTR) constitute an F-box domain. 4 Kelch repeats span residues 138–182 (EIYV…LIDQ), 184–229 (IYVL…VWPN), 248–294 (NPNA…IENV), and 296–340 (YACH…VNYG).

The polypeptide is F-box/kelch-repeat protein At5g39560 (Arabidopsis thaliana (Mouse-ear cress)).